The chain runs to 369 residues: Putative F-box protein At1g70960 (369 aa).

Residues 3 to 54 (NTSFETLPRHMQMEILSRVPLKFLMKFMCVSKKWASIIRGEEFREDYLFQSM) form the F-box domain.

This is Putative F-box protein At1g70960 from Arabidopsis thaliana (Mouse-ear cress).